Consider the following 217-residue polypeptide: Flagellin B2 (217 aa).

The propeptide occupies 1–12; the sequence is MKVFEFLKGKRG.

It belongs to the archaeal flagellin family.

Its subcellular location is the archaeal flagellum. Flagellin is the subunit protein which polymerizes to form the filaments of archaeal flagella. In Methanocaldococcus jannaschii (strain ATCC 43067 / DSM 2661 / JAL-1 / JCM 10045 / NBRC 100440) (Methanococcus jannaschii), this protein is Flagellin B2 (flaB2).